A 176-amino-acid polypeptide reads, in one-letter code: N-alpha-acetyltransferase 30 (176 aa).

The N-acetyltransferase domain maps to 3–159 (IVYKPLDIRN…DAFKLILPLT (157 aa)).

This sequence belongs to the acetyltransferase family. MAK3 subfamily. As to quaternary structure, component of the N-terminal acetyltransferase C (NatC) complex, which is composed of MAK3, MAK10 and MAK31.

It is found in the cytoplasm. The protein resides in the nucleus. The catalysed reaction is N-terminal L-methionyl-L-leucyl-[protein] + acetyl-CoA = N-terminal N(alpha)-acetyl-L-methionyl-L-leucyl-[protein] + CoA + H(+). The enzyme catalyses N-terminal L-methionyl-L-isoleucyl-[protein] + acetyl-CoA = N-terminal N(alpha)-acetyl-L-methionyl-L-isoleucyl-[protein] + CoA + H(+). It carries out the reaction N-terminal L-methionyl-L-phenylalanyl-[protein] + acetyl-CoA = N-terminal N(alpha)-acetyl-L-methionyl-L-phenylalanyl-[protein] + CoA + H(+). It catalyses the reaction N-terminal L-methionyl-L-tryptophyl-[protein] + acetyl-CoA = N-terminal N(alpha)-acetyl-L-methionyl-L-tryptophyl-[protein] + CoA + H(+). The catalysed reaction is N-terminal L-methionyl-L-tyrosyl-[protein] + acetyl-CoA = N-terminal N(alpha)-acetyl-L-methionyl-L-tyrosyl-[protein] + CoA + H(+). Functionally, catalytic component of the NatC N-terminal acetyltransferase, which catalyzes acetylation of the N-terminus Met of L-A virus GAG protein and possibly GRH1. The polypeptide is N-alpha-acetyltransferase 30 (MAK3) (Saccharomyces cerevisiae (strain ATCC 204508 / S288c) (Baker's yeast)).